The following is a 586-amino-acid chain: DNA-binding protein RFX8 (586 aa).

The RFX-type winged-helix DNA-binding region spans 22–97 (VIQWLVDNFC…YHYDGICIKK (76 aa)).

This sequence belongs to the RFX family.

It is found in the nucleus. Functionally, may be a transcription factor. This is DNA-binding protein RFX8 (RFX8) from Homo sapiens (Human).